Consider the following 532-residue polypeptide: MGAEIDSRIEDEQKLVDDMLKVLPEKAARNRRKHIVVRNCSTEQHIEADDKVIPGILTNRGCAFAGTKGVVFGPIKDMVHLVHGPIGCAFYTWGTRRNFAKAEEGGDNFMNYCVCTDMKETDIVFGGEKKLKKAIDEVVKIFHPEAITICATCPVGLIGDDIESVAREAEKEHGIKVIPARCEGYRGVSQSAGHHIASNALMEHLIGTEEIKSPTPFDINVFGEYNIGGDLWEVKPIFEKIGYRIVSSLTGDGSFHRISQAHQAKLSILVCHRSINYTNRMMEEKYGVPWLKVNYIGTKGTEKLLRKMAEFFDDPELTRKTEEVIAEEKAKYAEDIEKYRKKLKGKTAFIYAGGSRSHHYINLFEELGMKVIAAGYQFAHRDDYEGRQIIPQIKEKALGSILEDVHYERDENVKPTVSPERIEELKTKIGLMDYKGLFPDAEDGTIVIDDLNHHETEVLVKTLKPDIFCSGIKDKYWAQKPWSPSRQIHSYDYSGRYTGFSGVLNFARDIDMALHSPTWKFIRPPWKAENVE.

Residues C62, C88, and C153 each contribute to the [8Fe-7S] cluster site. 2 residues coordinate [7Fe-Mo-9S-C-homocitryl] cluster: C271 and H489.

Belongs to the NifD/NifK/NifE/NifN family. As to quaternary structure, tetramer of two alpha and two beta chains. Forms complex with the iron protein (nitrogenase component 2). Requires [8Fe-7S] cluster as cofactor. The cofactor is [7Fe-Mo-9S-C-homocitryl] cluster.

It catalyses the reaction N2 + 8 reduced [2Fe-2S]-[ferredoxin] + 16 ATP + 16 H2O = H2 + 8 oxidized [2Fe-2S]-[ferredoxin] + 2 NH4(+) + 16 ADP + 16 phosphate + 6 H(+). This molybdenum-iron protein is part of the nitrogenase complex that catalyzes the key enzymatic reactions in nitrogen fixation. The sequence is that of Nitrogenase molybdenum-iron protein alpha chain (nifD2) from Methanosarcina barkeri.